The chain runs to 555 residues: MSEAEARPTNFIRQIIDEDLASGKHTTICTRFPPEPNGYLHIGHAKSICLNFGIAQDYHGQCNLRFDDTNPVKEDLEFVESIKNDVQWLGFHWSGDVRYSSDYFDQLYNYAVELINKGLAYVDELSPEQIREYRGTLTAPGKNSPFRDRSVEENLALFEKMRAGGFEEGKACLRAKIDMASPFIVMRDPVLYRIKFAEHHQTGNKWCIYPMYDFTHCISDALEGITHSLCTLEFQDNRRLYDWVLDNITIPVHPRQYEFSRLNLEYTVMSKRKLNLLVTDKHVEGWDDPRMPTISGLRRRGYTAASIREFCKRIGVTKQDNTVEMAALEACIREDLNENAPRAMAVIDPVKLVIENYPQGHSEMVSMPNHPNKPEMGNRDVPFSGEIWIDRADFREEANKQYKRLVLGKEVRLRNAYVIKAERVEKDDAGEITTIYCTYDAETLSKDPADGRKVKGVIHWVSAAHALPVEIRLYDRLFSVPNPGAAEDFLTTINKDSLVIKQGYAEPGLKNAEAGKAWQFEREGYFCLDSRHANGDKLVFNRTVGLRDTWAKIGE.

The 'HIGH' region motif lies at 34 to 44 (PEPNGYLHIGH). Residues 35 to 37 (EPN) and 41 to 47 (HIGHAKS) contribute to the ATP site. L-glutamine-binding residues include Asp-67 and Tyr-212. ATP contacts are provided by residues Thr-231, 261–262 (RL), and 269–271 (MSK). A 'KMSKS' region motif is present at residues 268-272 (VMSKR).

It belongs to the class-I aminoacyl-tRNA synthetase family. Monomer.

The protein localises to the cytoplasm. The enzyme catalyses tRNA(Gln) + L-glutamine + ATP = L-glutaminyl-tRNA(Gln) + AMP + diphosphate. The polypeptide is Glutamine--tRNA ligase (Cronobacter sakazakii (strain ATCC BAA-894) (Enterobacter sakazakii)).